We begin with the raw amino-acid sequence, 180 residues long: Pro-glucagon (180 aa).

An N-terminal signal peptide occupies residues 1 to 20 (MKSLYFVAGLFVMLVQGSWQ). Positions 25-35 (NTEEKSSSFPA) are enriched in polar residues. Positions 25–59 (NTEEKSSSFPAPQTDPLGDPDQINEDKRHSQGTFT) are disordered. Ser54 carries the post-translational modification Phosphoserine. Positions 84-89 (NKNNIA) are excised as a propeptide. 2 positions are modified to phosphoserine: Ser105 and Ser108. Arginine amide is present on Arg127. A propeptide spanning residues 131–145 (DFPEEVNIVEELRRR) is cleaved from the precursor. Ser150 and Ser152 each carry phosphoserine.

Belongs to the glucagon family. Post-translationally, proglucagon is post-translationally processed in a tissue-specific manner in pancreatic A cells and intestinal L cells. In pancreatic A cells, the major bioactive hormone is glucagon cleaved by PCSK2/PC2. In the intestinal L cells PCSK1/PC1 liberates GLP-1, GLP-2, glicentin and oxyntomodulin. GLP-1 is further N-terminally truncated by post-translational processing in the intestinal L cells resulting in GLP-1(7-37) GLP-1-(7-36)amide. The C-terminal amidation is neither important for the metabolism of GLP-1 nor for its effects on the endocrine pancreas. Glucagon is secreted in the A cells of the islets of Langerhans. GLP-1, GLP-2, oxyntomodulin and glicentin are secreted from enteroendocrine cells throughout the gastrointestinal tract.

Its subcellular location is the secreted. In terms of biological role, plays a key role in glucose metabolism and homeostasis. Regulates blood glucose by increasing gluconeogenesis and decreasing glycolysis. A counterregulatory hormone of insulin, raises plasma glucose levels in response to insulin-induced hypoglycemia. Plays an important role in initiating and maintaining hyperglycemic conditions in diabetes. Its function is as follows. Potent stimulator of glucose-dependent insulin release. Also stimulates insulin release in response to IL6. Plays important roles on gastric motility and the suppression of plasma glucagon levels. May be involved in the suppression of satiety and stimulation of glucose disposal in peripheral tissues, independent of the actions of insulin. Has growth-promoting activities on intestinal epithelium. May also regulate the hypothalamic pituitary axis (HPA) via effects on LH, TSH, CRH, oxytocin, and vasopressin secretion. Increases islet mass through stimulation of islet neogenesis and pancreatic beta cell proliferation. Inhibits beta cell apoptosis. Stimulates intestinal growth and up-regulates villus height in the small intestine, concomitant with increased crypt cell proliferation and decreased enterocyte apoptosis. The gastrointestinal tract, from the stomach to the colon is the principal target for GLP-2 action. Plays a key role in nutrient homeostasis, enhancing nutrient assimilation through enhanced gastrointestinal function, as well as increasing nutrient disposal. Stimulates intestinal glucose transport and decreases mucosal permeability. Functionally, significantly reduces food intake. Inhibits gastric emptying in humans. Suppression of gastric emptying may lead to increased gastric distension, which may contribute to satiety by causing a sensation of fullness. In terms of biological role, may modulate gastric acid secretion and the gastro-pyloro-duodenal activity. May play an important role in intestinal mucosal growth in the early period of life. This chain is Pro-glucagon (GCG), found in Bos taurus (Bovine).